A 577-amino-acid chain; its full sequence is Methionine--tRNA ligase (577 aa).

A 'HIGH' region motif is present at residues 21-31 (PYANGPLHVGH). Zn(2+)-binding residues include Cys153, Cys156, Cys166, and Cys169. The 'KMSKS' region signature appears at 355–359 (QMSTS). Thr358 is an ATP binding site.

It belongs to the class-I aminoacyl-tRNA synthetase family. MetG type 1 subfamily. As to quaternary structure, monomer. Zn(2+) is required as a cofactor.

Its subcellular location is the cytoplasm. It catalyses the reaction tRNA(Met) + L-methionine + ATP = L-methionyl-tRNA(Met) + AMP + diphosphate. Functionally, is required not only for elongation of protein synthesis but also for the initiation of all mRNA translation through initiator tRNA(fMet) aminoacylation. The polypeptide is Methionine--tRNA ligase (Rubrobacter xylanophilus (strain DSM 9941 / JCM 11954 / NBRC 16129 / PRD-1)).